A 40-amino-acid chain; its full sequence is VRNHVTCRINRGFCVPIRCPGRTRQIGTCFGPRIKCCRSW.

3 disulfides stabilise this stretch: Cys7–Cys36, Cys14–Cys29, and Cys19–Cys37.

This sequence belongs to the beta-defensin family. In terms of tissue distribution, neutrophilic granules.

Its subcellular location is the secreted. Has bactericidal activity. Active against E.coli ML35 and S.aureus 502A. The chain is Beta-defensin 2 (DEFB2) from Bos taurus (Bovine).